We begin with the raw amino-acid sequence, 185 residues long: Dehydrin ERD14 (185 aa).

Basic and acidic residues-rich tracts occupy residues 1–13 (MAEE…EQEV), 25–45 (VTDR…KPEE), 52–78 (FEQK…HRSD), and 103–134 (KPTT…KPED). 2 disordered regions span residues 1-138 (MAEE…GSAV) and 166-185 (EKLP…KDKE). Ala-2 is subject to N-acetylalanine. At Ser-59 the chain carries Phosphoserine. Repeat copies occupy residues 112 to 132 (EEEK…HKKP) and 154 to 174 (PVEK…YHPK). The tract at residues 112–174 (EEEKKGFMEK…KEKLPGYHPK (63 aa)) is 2 X 21 AA repeats, Lys-rich.

This sequence belongs to the plant dehydrin family. In terms of tissue distribution, in stems, cauline leaves, roots and flowers. Low levels found in maturing seeds. Absent in dry seeds.

Functionally, intrinsically disordered protein acting as a chaperone. Prevents heat-induced aggregation and/or inactivation of various substrates. Binds to acidic phospholipid vesicles without affecting membrane fluidity. The sequence is that of Dehydrin ERD14 (ERD14) from Arabidopsis thaliana (Mouse-ear cress).